The chain runs to 259 residues: Protein LEAD-SENSITIVE 1 (259 aa).

Residues 20 to 168 (YSWRTAYIYA…CKTALLVLEG (149 aa)) form the LRAT domain. Catalysis depends on residues His30 and His42. Cys152 (acyl-thioester intermediate) is an active-site residue.

As to expression, highly expressed in inflorescences, siliques and stems, and, to a lower extent, in roots and leaves.

The protein resides in the cytoplasm. In terms of biological role, confers tolerance to lead ions (Pb) stress mediated by Pb(NO(3))(2) probably by promoting Pb accumulation leading to subsequent glutathione-dependent phytochelatin (PC) synthesis and related gene expression, including PDR12/ABCG40, GSH1, GSH2, GR1, GR2, PCS1 and PCS2. In Arabidopsis thaliana (Mouse-ear cress), this protein is Protein LEAD-SENSITIVE 1.